The primary structure comprises 245 residues: Orotidine 5'-phosphate decarboxylase (245 aa).

Substrate is bound by residues D22, K44, 71 to 80 (DLKFHDIPNT), T131, R192, Q201, G221, and R222. The Proton donor role is filled by K73.

It belongs to the OMP decarboxylase family. Type 1 subfamily. As to quaternary structure, homodimer.

The enzyme catalyses orotidine 5'-phosphate + H(+) = UMP + CO2. The protein operates within pyrimidine metabolism; UMP biosynthesis via de novo pathway; UMP from orotate: step 2/2. Catalyzes the decarboxylation of orotidine 5'-monophosphate (OMP) to uridine 5'-monophosphate (UMP). This is Orotidine 5'-phosphate decarboxylase from Escherichia coli O127:H6 (strain E2348/69 / EPEC).